The primary structure comprises 160 residues: Protein-export protein SecB (160 aa).

Belongs to the SecB family. In terms of assembly, homotetramer, a dimer of dimers. One homotetramer interacts with 1 SecA dimer.

It is found in the cytoplasm. In terms of biological role, one of the proteins required for the normal export of preproteins out of the cell cytoplasm. It is a molecular chaperone that binds to a subset of precursor proteins, maintaining them in a translocation-competent state. It also specifically binds to its receptor SecA. This Rhizobium etli (strain ATCC 51251 / DSM 11541 / JCM 21823 / NBRC 15573 / CFN 42) protein is Protein-export protein SecB.